Consider the following 86-residue polypeptide: Cell division topological specificity factor (86 aa).

It belongs to the MinE family.

Functionally, prevents the cell division inhibition by proteins MinC and MinD at internal division sites while permitting inhibition at polar sites. This ensures cell division at the proper site by restricting the formation of a division septum at the midpoint of the long axis of the cell. The chain is Cell division topological specificity factor from Shewanella piezotolerans (strain WP3 / JCM 13877).